The chain runs to 833 residues: Multiple RNA-binding domain-containing protein 1 (833 aa).

An RRM 1 domain is found at 2–83 (SRIIIKNIPR…SRIEVHRALD (82 aa)). The interval 160 to 251 (ENEEVFDTEI…DAQAPLSDDE (92 aa)) is disordered. 2 stretches are compositionally biased toward basic and acidic residues: residues 188–205 (AAKRHEGDSIKSTEHDST) and 213–222 (DGREKSSSEL). 4 RRM domains span residues 323 to 401 (KRLF…PAKA), 506 to 578 (NVLL…KAPR), 619 to 702 (ATIY…LSHQ), and 721 to 798 (TKIL…YASN).

The protein belongs to the RRM MRD1 family.

The protein resides in the nucleus. Involved in pre-rRNA processing. This chain is Multiple RNA-binding domain-containing protein 1 (mrd1), found in Schizosaccharomyces pombe (strain 972 / ATCC 24843) (Fission yeast).